The following is a 25-amino-acid chain: Plasticin-L1 (25 aa).

The protein belongs to the frog skin active peptide (FSAP) family. Plasticin subfamily. Expressed by the skin glands.

The protein localises to the secreted. It is found in the target cell membrane. Its function is as follows. May play an immunomodulatory role in frog skin in response to microbial pathogens, since it increases the production of the pro-inflammatory cytokines TNF-alpha, IL-1 beta, IL-12, and IL-23 by mouse peritoneal macrophages and has no effect on the production of the anti-inflammatory cytokine IL-10. It is not known whether stimulation of cytokine production arises from a non-specific interaction of the peptide with the macrophage membrane or from interaction with a specific receptor. Shows a low activity in stimulating insulin release from rat BRIN-BD11 beta cells, and acts without loss of integrity of the plasma membrane. Shows a marked affinity for both neutral and anionic membranes models. Does not show antibacterial (E.coli and S.aureus). Does not show hemolytic activity against human erythrocytes. This is Plasticin-L1 from Leptodactylus laticeps (Santa Fe frog).